Here is a 222-residue protein sequence, read N- to C-terminus: Uridine diphosphate glucose pyrophosphatase NUDT14 (222 aa).

The 169-residue stretch at 38-206 (KTHDSVTILM…DIPKTLGVIY (169 aa)) folds into the Nudix hydrolase domain. Residues 111-129 (PGLSLEEAACKEAWEECGY) carry the Nudix box motif.

It belongs to the Nudix hydrolase family. As to quaternary structure, homodimer. Mg(2+) serves as cofactor.

It is found in the cytoplasm. The catalysed reaction is UDP-sugar + H2O = UMP + alpha-D-aldose 1-phosphate.. Functionally, hydrolyzes UDP-glucose to glucose 1-phosphate and UMP and ADP-ribose to ribose 5-phosphate and AMP. The physiological substrate is probably UDP-glucose. Poor activity on other substrates such as ADP-glucose, CDP-glucose, GDP-glucose and GDP-mannose. In Mus musculus (Mouse), this protein is Uridine diphosphate glucose pyrophosphatase NUDT14 (Nudt14).